The sequence spans 190 residues: UPF0200 protein MTH_434 (190 aa).

10–17 (GMPGAGKG) contacts ATP.

Belongs to the UPF0200 family.

The chain is UPF0200 protein MTH_434 from Methanothermobacter thermautotrophicus (strain ATCC 29096 / DSM 1053 / JCM 10044 / NBRC 100330 / Delta H) (Methanobacterium thermoautotrophicum).